The chain runs to 158 residues: Endoribonuclease YbeY (158 aa).

Zn(2+)-binding residues include His-124, His-128, and His-134.

This sequence belongs to the endoribonuclease YbeY family. Zn(2+) is required as a cofactor.

It is found in the cytoplasm. Functionally, single strand-specific metallo-endoribonuclease involved in late-stage 70S ribosome quality control and in maturation of the 3' terminus of the 16S rRNA. This chain is Endoribonuclease YbeY, found in Caldicellulosiruptor saccharolyticus (strain ATCC 43494 / DSM 8903 / Tp8T 6331).